We begin with the raw amino-acid sequence, 301 residues long: Putative S-adenosyl-L-methionine-dependent methyltransferase MAP_3777 (301 aa).

Residues Asp-126 and 155 to 156 each bind S-adenosyl-L-methionine; that span reads DL.

The protein belongs to the UPF0677 family.

Exhibits S-adenosyl-L-methionine-dependent methyltransferase activity. This is Putative S-adenosyl-L-methionine-dependent methyltransferase MAP_3777 from Mycolicibacterium paratuberculosis (strain ATCC BAA-968 / K-10) (Mycobacterium paratuberculosis).